We begin with the raw amino-acid sequence, 410 residues long: Protein BTN2 (410 aa).

Disordered stretches follow at residues 223–264 (INEP…TKED) and 276–410 (MQEE…IEEI). Basic and acidic residues-rich tracts occupy residues 233-264 (SKIDESHDDVNMSESLKEEEAEKAKEPLTKED) and 276-311 (MQEESRKSEQEKAAKEDEERQKKEKEARLKARKESL). Positions 243 to 330 (NMSESLKEEE…QQKKLQNSKS (88 aa)) form a coiled coil. Residues 334-362 (SEIEASNKNNNSNSGSAESDNESINSDSD) show a composition bias toward low complexity. The span at 364-373 (TLDFSVSGNT) shows a compositional bias: polar residues.

In terms of assembly, interacts with RHB1, IST2, TDA3 and YIF1.

It is found in the cytoplasm. The protein localises to the late endosome. Its function is as follows. V-SNARE binding protein that facilitates specific protein retrieval from a late endosome to the Golgi. Modulates the rate of arginine uptake. Involved in pH homeostasis. Required for the correct localization of IST2. May be involved in ion homeostasis together with IST2. In Saccharomyces cerevisiae (strain ATCC 204508 / S288c) (Baker's yeast), this protein is Protein BTN2 (BTN2).